We begin with the raw amino-acid sequence, 100 residues long: Cobalt transport protein CbiN (100 aa).

2 consecutive transmembrane segments (helical) span residues 8-28 (LSNW…LIFV) and 69-89 (LLFS…VGLY).

This sequence belongs to the CbiN family. Forms an energy-coupling factor (ECF) transporter complex composed of an ATP-binding protein (A component, CbiO), a transmembrane protein (T component, CbiQ) and 2 possible substrate-capture proteins (S components, CbiM and CbiN) of unknown stoichimetry.

It is found in the cell inner membrane. It participates in cofactor biosynthesis; adenosylcobalamin biosynthesis. Its function is as follows. Part of the energy-coupling factor (ECF) transporter complex CbiMNOQ involved in cobalt import. In Nostoc sp. (strain PCC 7120 / SAG 25.82 / UTEX 2576), this protein is Cobalt transport protein CbiN.